The chain runs to 400 residues: Probable vacuolar protease A (400 aa).

A signal peptide spans 1–18; sequence MKGSLLLAGATLLGCTSA. The propeptide at 19 to 72 is activation peptide; it reads KLHSLKLKKVSLKEQLEHADIDVQIKSLGQKYMGIRPEQHEQQMFKEQTPIEAE. The 311-residue stretch at 87–397 folds into the Peptidase A1 domain; that stretch reads YFSEISIGTP…DLGKGTVGLA (311 aa). Asp-105 is an active-site residue. Cys-118 and Cys-123 form a disulfide bridge. N-linked (GlcNAc...) asparagine glycosylation occurs at Asn-140. The active site involves Asp-289. Cysteines 323 and 356 form a disulfide. An N-linked (GlcNAc...) asparagine glycan is attached at Asn-340.

It belongs to the peptidase A1 family.

Its subcellular location is the vacuole lumen. It localises to the secreted. It catalyses the reaction Hydrolysis of proteins with broad specificity for peptide bonds. Cleaves -Leu-Leu-|-Val-Tyr- bond in a synthetic substrate. Does not act on esters of Tyr or Arg.. In terms of biological role, vacuolar aspartic endopeptidase which is probably also secreted and contributes to virulence. The chain is Probable vacuolar protease A (PEP2) from Trichophyton verrucosum (strain HKI 0517).